The primary structure comprises 554 residues: 3-(3-hydroxy-phenyl)propionate/3-hydroxycinnamic acid hydroxylase (554 aa).

FAD contacts are provided by residues 17–46 (QVAI…VVEK) and 285–295 (FRIDRVLLAGD).

This sequence belongs to the PheA/TfdB FAD monooxygenase family. Requires FAD as cofactor.

The catalysed reaction is 3-(3-hydroxyphenyl)propanoate + NADH + O2 + H(+) = 3-(2,3-dihydroxyphenyl)propanoate + NAD(+) + H2O. It carries out the reaction (2E)-3-(3-hydroxyphenyl)prop-2-enoate + NADH + O2 + H(+) = (2E)-3-(2,3-dihydroxyphenyl)prop-2-enoate + NAD(+) + H2O. Its pathway is aromatic compound metabolism; 3-phenylpropanoate degradation. Catalyzes the insertion of one atom of molecular oxygen into position 2 of the phenyl ring of 3-(3-hydroxyphenyl)propionate (3-HPP) and hydroxycinnamic acid (3HCI). The sequence is that of 3-(3-hydroxy-phenyl)propionate/3-hydroxycinnamic acid hydroxylase from Escherichia coli O17:K52:H18 (strain UMN026 / ExPEC).